We begin with the raw amino-acid sequence, 714 residues long: Polyribonucleotide nucleotidyltransferase (714 aa).

Residues Asp-490 and Asp-496 each contribute to the Mg(2+) site. The KH domain occupies 556–615 (PRIETMQIPTDKIREVIGSGGKVIREIVEVSGAKVDINDDGIIKIASPNGDSIKKAYDMI). Residues 625–693 (GQVYTGKVVK…DRGKVRLSMK (69 aa)) form the S1 motif domain.

The protein belongs to the polyribonucleotide nucleotidyltransferase family. The cofactor is Mg(2+).

The protein localises to the cytoplasm. It carries out the reaction RNA(n+1) + phosphate = RNA(n) + a ribonucleoside 5'-diphosphate. Its function is as follows. Involved in mRNA degradation. Catalyzes the phosphorolysis of single-stranded polyribonucleotides processively in the 3'- to 5'-direction. The polypeptide is Polyribonucleotide nucleotidyltransferase (Ruegeria pomeroyi (strain ATCC 700808 / DSM 15171 / DSS-3) (Silicibacter pomeroyi)).